The chain runs to 725 residues: Ribonuclease Y (725 aa).

The chain crosses the membrane as a helical span at residues 4–24 (VLVILLSLVLLVLVALILAVA). 3 disordered regions span residues 62–140 (DGPA…ASDT), 165–195 (VAATEDTSLEAPLRESALRESAPGESASVRR), and 300–321 (EQRVEERTAGLDEHASRLAGRE). Composition is skewed to low complexity over residues 84-100 (DAPGAAYGESAAAPDAG) and 114-137 (AAAPEPGAAIGGAPTPAAGSPADA). Positions 415–481 (VVTVLHLPGD…RITLAALVSD (67 aa)) constitute a KH domain. In terms of domain architecture, HD spans 541–634 (VLAHLIESAH…TQAADQISGG (94 aa)).

The protein belongs to the RNase Y family.

The protein resides in the cell membrane. Endoribonuclease that initiates mRNA decay. The chain is Ribonuclease Y from Frankia alni (strain DSM 45986 / CECT 9034 / ACN14a).